Reading from the N-terminus, the 191-residue chain is dTTP/UTP pyrophosphatase (191 aa).

The active-site Proton acceptor is the aspartate 71.

The protein belongs to the Maf family. YhdE subfamily. A divalent metal cation serves as cofactor.

Its subcellular location is the cytoplasm. The enzyme catalyses dTTP + H2O = dTMP + diphosphate + H(+). It catalyses the reaction UTP + H2O = UMP + diphosphate + H(+). Functionally, nucleoside triphosphate pyrophosphatase that hydrolyzes dTTP and UTP. May have a dual role in cell division arrest and in preventing the incorporation of modified nucleotides into cellular nucleic acids. In Hyphomonas neptunium (strain ATCC 15444), this protein is dTTP/UTP pyrophosphatase.